The following is a 234-amino-acid chain: 1-(5-phosphoribosyl)-5-[(5-phosphoribosylamino)methylideneamino] imidazole-4-carboxamide isomerase (234 aa).

Aspartate 9 (proton acceptor) is an active-site residue. Aspartate 131 acts as the Proton donor in catalysis.

The protein belongs to the HisA/HisF family.

It is found in the cytoplasm. It carries out the reaction 1-(5-phospho-beta-D-ribosyl)-5-[(5-phospho-beta-D-ribosylamino)methylideneamino]imidazole-4-carboxamide = 5-[(5-phospho-1-deoxy-D-ribulos-1-ylimino)methylamino]-1-(5-phospho-beta-D-ribosyl)imidazole-4-carboxamide. The protein operates within amino-acid biosynthesis; L-histidine biosynthesis; L-histidine from 5-phospho-alpha-D-ribose 1-diphosphate: step 4/9. This Staphylococcus aureus (strain MRSA252) protein is 1-(5-phosphoribosyl)-5-[(5-phosphoribosylamino)methylideneamino] imidazole-4-carboxamide isomerase.